The primary structure comprises 320 residues: Protoheme IX farnesyltransferase 1 (320 aa).

Helical transmembrane passes span 34–54 (GIIISNSIAAFGGFWIAFASA), 58–78 (LTGLAFLMTMVTAMLGTAFVM), 112–132 (AMILTYGSVLGIAGLAMLYSL), 135–155 (LTAFLGLAAFIFYAIIYTVWV), 160–180 (VWSTFVGSFPGAAPPLMGYCA), 189–209 (AVLLYTIMFLWQPPHFWAIGI), 234–254 (IKMMQYIAVLVPVTLLFPFSL), 255–275 (GTGHISPFYFLAALVLGGIWI), and 299–319 (LIYFCLLFFIMMIDSFMMFLI).

This sequence belongs to the UbiA prenyltransferase family. Protoheme IX farnesyltransferase subfamily. Interacts with CtaA.

It localises to the cell membrane. The enzyme catalyses heme b + (2E,6E)-farnesyl diphosphate + H2O = Fe(II)-heme o + diphosphate. Its pathway is porphyrin-containing compound metabolism; heme O biosynthesis; heme O from protoheme: step 1/1. Converts heme B (protoheme IX) to heme O by substitution of the vinyl group on carbon 2 of heme B porphyrin ring with a hydroxyethyl farnesyl side group. The protein is Protoheme IX farnesyltransferase 1 (ctaB1) of Bacillus subtilis (strain 168).